Reading from the N-terminus, the 143-residue chain is Large ribosomal subunit protein uL11 (143 aa).

The protein belongs to the universal ribosomal protein uL11 family. In terms of assembly, part of the ribosomal stalk of the 50S ribosomal subunit. Interacts with L10 and the large rRNA to form the base of the stalk. L10 forms an elongated spine to which L12 dimers bind in a sequential fashion forming a multimeric L10(L12)X complex. Post-translationally, one or more lysine residues are methylated.

Its function is as follows. Forms part of the ribosomal stalk which helps the ribosome interact with GTP-bound translation factors. The chain is Large ribosomal subunit protein uL11 from Chromobacterium violaceum (strain ATCC 12472 / DSM 30191 / JCM 1249 / CCUG 213 / NBRC 12614 / NCIMB 9131 / NCTC 9757 / MK).